A 418-amino-acid polypeptide reads, in one-letter code: tRNA(Met) cytidine acetate ligase (418 aa).

Gly95, Asn161, and Arg186 together coordinate ATP.

It belongs to the TmcAL family.

The protein resides in the cytoplasm. It carries out the reaction cytidine(34) in elongator tRNA(Met) + acetate + ATP = N(4)-acetylcytidine(34) in elongator tRNA(Met) + AMP + diphosphate. Catalyzes the formation of N(4)-acetylcytidine (ac(4)C) at the wobble position of elongator tRNA(Met), using acetate and ATP as substrates. First activates an acetate ion to form acetyladenylate (Ac-AMP) and then transfers the acetyl group to tRNA to form ac(4)C34. The chain is tRNA(Met) cytidine acetate ligase from Thermotoga petrophila (strain ATCC BAA-488 / DSM 13995 / JCM 10881 / RKU-1).